We begin with the raw amino-acid sequence, 85 residues long: Small ribosomal subunit protein bS16 (85 aa).

This sequence belongs to the bacterial ribosomal protein bS16 family.

This Rubrobacter xylanophilus (strain DSM 9941 / JCM 11954 / NBRC 16129 / PRD-1) protein is Small ribosomal subunit protein bS16.